The chain runs to 1492 residues: DNA-directed RNA polymerase subunit beta' (1492 aa).

Zn(2+) contacts are provided by cysteine 67, cysteine 69, cysteine 82, and cysteine 85. Aspartate 499, aspartate 501, and aspartate 503 together coordinate Mg(2+). 4 residues coordinate Zn(2+): cysteine 867, cysteine 943, cysteine 950, and cysteine 953.

Belongs to the RNA polymerase beta' chain family. In terms of assembly, the RNAP catalytic core consists of 2 alpha, 1 beta, 1 beta' and 1 omega subunit. When a sigma factor is associated with the core the holoenzyme is formed, which can initiate transcription. Requires Mg(2+) as cofactor. Zn(2+) is required as a cofactor.

It catalyses the reaction RNA(n) + a ribonucleoside 5'-triphosphate = RNA(n+1) + diphosphate. Functionally, DNA-dependent RNA polymerase catalyzes the transcription of DNA into RNA using the four ribonucleoside triphosphates as substrates. The chain is DNA-directed RNA polymerase subunit beta' from Chlorobium phaeobacteroides (strain DSM 266 / SMG 266 / 2430).